The sequence spans 594 residues: MLPAQKHTLETLLENSVKQVVQASKGDADAAFVLPAIALERPKVAAHGDVACNVALQLAKPLGANPRQLAERIVAALTAQPAAAGLVDAAEIAGPGFINLRLTPASKQAVIGAVFAQGRAFGASEREHGKRVLLEFVSANPTGPLHVGHGRQAALGDALANVLASQGYAVHREFYYNDAGVQIGNLAISTQARARGLKPGDAGWPEAAYNGEYIADIARDYLNGETVAASDGEPVTGKRDADDLEAIRKFAVAYLRREQDMDLKAFGVKFDQYYLESSLYTEGRVEKTVDALIAAGMTYEQEGALWLRTTDEGDDKDRVMRKTDGTYTYFVPDVAYHVTKWERGFTKVINIQGSDHHGTIARVRAGLQGLHIGIPKGYPDYVLHKMVTVMRDGQEVKISKRAGSYVTVRDLIEWSGGATPGSEVSPELLDEATITRGRDAVRFFLISRKADTEFVFDIDLALKQNDENPVYYVQYAHARICSVLNEWKSRYGATDALLPGADLSPLDSKQAMALMQKLAEYPDVLAHAANELAPHAVAFYLRELASEFHSFYNAERVLVDEEAPRTARIALLAATRQVLENGLAMLGVSAPSKM.

The 'HIGH' region motif lies at 139 to 149; sequence ANPTGPLHVGH.

It belongs to the class-I aminoacyl-tRNA synthetase family. Monomer.

Its subcellular location is the cytoplasm. The enzyme catalyses tRNA(Arg) + L-arginine + ATP = L-arginyl-tRNA(Arg) + AMP + diphosphate. The chain is Arginine--tRNA ligase from Burkholderia thailandensis (strain ATCC 700388 / DSM 13276 / CCUG 48851 / CIP 106301 / E264).